The sequence spans 224 residues: Thiamine-phosphate synthase (224 aa).

Residues 43 to 47 and asparagine 75 each bind 4-amino-2-methyl-5-(diphosphooxymethyl)pyrimidine; that span reads QYRPK. Positions 76 and 95 each coordinate Mg(2+). Serine 114 contributes to the 4-amino-2-methyl-5-(diphosphooxymethyl)pyrimidine binding site. 141 to 143 is a 2-[(2R,5Z)-2-carboxy-4-methylthiazol-5(2H)-ylidene]ethyl phosphate binding site; that stretch reads SAT. Residue lysine 144 coordinates 4-amino-2-methyl-5-(diphosphooxymethyl)pyrimidine. Residue glycine 171 coordinates 2-[(2R,5Z)-2-carboxy-4-methylthiazol-5(2H)-ylidene]ethyl phosphate.

The protein belongs to the thiamine-phosphate synthase family. The cofactor is Mg(2+).

It catalyses the reaction 2-[(2R,5Z)-2-carboxy-4-methylthiazol-5(2H)-ylidene]ethyl phosphate + 4-amino-2-methyl-5-(diphosphooxymethyl)pyrimidine + 2 H(+) = thiamine phosphate + CO2 + diphosphate. It carries out the reaction 2-(2-carboxy-4-methylthiazol-5-yl)ethyl phosphate + 4-amino-2-methyl-5-(diphosphooxymethyl)pyrimidine + 2 H(+) = thiamine phosphate + CO2 + diphosphate. The catalysed reaction is 4-methyl-5-(2-phosphooxyethyl)-thiazole + 4-amino-2-methyl-5-(diphosphooxymethyl)pyrimidine + H(+) = thiamine phosphate + diphosphate. It participates in cofactor biosynthesis; thiamine diphosphate biosynthesis; thiamine phosphate from 4-amino-2-methyl-5-diphosphomethylpyrimidine and 4-methyl-5-(2-phosphoethyl)-thiazole: step 1/1. In terms of biological role, condenses 4-methyl-5-(beta-hydroxyethyl)thiazole monophosphate (THZ-P) and 2-methyl-4-amino-5-hydroxymethyl pyrimidine pyrophosphate (HMP-PP) to form thiamine monophosphate (TMP). This is Thiamine-phosphate synthase from Methylococcus capsulatus (strain ATCC 33009 / NCIMB 11132 / Bath).